Consider the following 214-residue polypeptide: MELDLICRDLGVVDYAETWERMKQFTQIRSKDDADEIWLLEHPSLFTQGQAGKEEHLLAPGDIPVIQVDRGGQVTYHGPGQLVAYVMVDLKRLGIGVRDLVSVLENSVVRALALNAIEAYPKPDAPGVYVDEQKIASLGLRVRRGCSFHGLALNVDMDLTPFNRINPCGYQGLQMVDMKRLNKGVILSNVKAQLANQLAEQLGYNYPAIQQGWK.

Positions 31–206 (KDDADEIWLL…QLAEQLGYNY (176 aa)) constitute a BPL/LPL catalytic domain. Residues 70 to 77 (RGGQVTYH), 137 to 139 (SLG), and 150 to 152 (GLA) contribute to the substrate site. Residue Cys-168 is the Acyl-thioester intermediate of the active site.

The protein belongs to the LipB family.

The protein localises to the cytoplasm. The enzyme catalyses octanoyl-[ACP] + L-lysyl-[protein] = N(6)-octanoyl-L-lysyl-[protein] + holo-[ACP] + H(+). It participates in protein modification; protein lipoylation via endogenous pathway; protein N(6)-(lipoyl)lysine from octanoyl-[acyl-carrier-protein]: step 1/2. Its function is as follows. Catalyzes the transfer of endogenously produced octanoic acid from octanoyl-acyl-carrier-protein onto the lipoyl domains of lipoate-dependent enzymes. Lipoyl-ACP can also act as a substrate although octanoyl-ACP is likely to be the physiological substrate. The protein is Octanoyltransferase of Marinomonas sp. (strain MWYL1).